Reading from the N-terminus, the 180-residue chain is Ribosome rescue factor SmrB (180 aa).

The Smr domain maps to 98-173 (LDLHGLTQLQ…GNAALLVLVA (76 aa)).

Belongs to the SmrB family. As to quaternary structure, associates with collided ribosomes, but not with correctly translating polysomes.

In terms of biological role, acts as a ribosome collision sensor. Detects stalled/collided disomes (pairs of ribosomes where the leading ribosome is stalled and a second ribosome has collided with it) and endonucleolytically cleaves mRNA at the 5' boundary of the stalled ribosome. Stalled/collided disomes form a new interface (primarily via the 30S subunits) that binds SmrB. Cleaved mRNA becomes available for tmRNA ligation, leading to ribosomal subunit dissociation and rescue of stalled ribosomes. This is Ribosome rescue factor SmrB from Pectobacterium carotovorum subsp. carotovorum (strain PC1).